The sequence spans 278 residues: Pca operon regulatory protein (278 aa).

An HTH iclR-type domain is found at 31–91 (VAGISKGMAI…SDGHYFYLTP (61 aa)). Positions 53-72 (ITMAAEKTGMTRAAARRHLL) form a DNA-binding region, H-T-H motif. Residues 106 to 278 (LPKISQPLLN…ETARELRNIL (173 aa)) form the IclR-ED domain.

In terms of biological role, activates transcription of the pca operon. This chain is Pca operon regulatory protein (pcaU), found in Acinetobacter baylyi (strain ATCC 33305 / BD413 / ADP1).